We begin with the raw amino-acid sequence, 114 residues long: Circadian clock oscillator protein KaiB (114 aa).

It belongs to the KaiB family. As to quaternary structure, may undergo a major conformational rearrangment; in the free state forms homooligomers. When bound to KaiC switches to a monomeric thioredoxin-fold (KaiB(fs)). The active oscillator complex is probably KaiC(6):KaiB(6).

Component of the KaiBC clock protein complex, which constitutes the main circadian regulator in cyanobacteria; it may modify the ATPase activity of KaiC. In terms of biological role, may be a metamorphic protein which reversibly switches between an inactive tetrameric fold and a rare, thioredoxin-like monomeric fold (KaiB(fs)). KaiB(fs) binds phospho-KaiC, and perhaps clock output effectors. This Prochlorococcus marinus (strain MIT 9211) protein is Circadian clock oscillator protein KaiB.